An 89-amino-acid chain; its full sequence is MLKAQVFMFVTVLVFVCVFINSNDAKRYIEYPPWQKHPCNPRFPTPDCYKRTPANPYRRGCTCISRCRRDCGGLSTWKKLLDTILKIPV.

A signal peptide spans 1 to 25 (MLKAQVFMFVTVLVFVCVFINSNDA). 2 cysteine pairs are disulfide-bonded: cysteine 39–cysteine 48 and cysteine 61–cysteine 67.

Belongs to the plant rapid alkalinization factor (RALF) family.

It is found in the secreted. In terms of biological role, cell signaling peptide that may regulate plant stress, growth, and development. Mediates a rapid alkalinization of extracellular space by mediating a transient increase in the cytoplasmic Ca(2+) concentration leading to a calcium-dependent signaling events through a cell surface receptor and a concomitant activation of some intracellular mitogen-activated protein kinases. The protein is Protein RALF-like 5 (RALFL5) of Arabidopsis thaliana (Mouse-ear cress).